The sequence spans 732 residues: Subtilisin-like protease SBT4.13 (732 aa).

Positions 1-24 (MATLAASSSLLSCLLVLFLSSVSA) are cleaved as a signal peptide. Positions 25-109 (VTDDKQVYIV…VFPNKKLQLQ (85 aa)) are cleaved as a propeptide — activation peptide. Residues 31-108 (VYIVYMGSLS…SVFPNKKLQL (78 aa)) enclose the Inhibitor I9 domain. Residues 113 to 579 (SWDFMGLKEG…SGHVDPIAAS (467 aa)) enclose the Peptidase S8 domain. The Charge relay system role is filled by D141. N-linked (GlcNAc...) asparagine glycosylation is present at N172. The active-site Charge relay system is the H196. An N-linked (GlcNAc...) asparagine glycan is attached at N219. Positions 352 to 436 (DYPLVYGKSA…GLLTEDFESL (85 aa)) constitute a PA domain. N-linked (GlcNAc...) asparagine glycosylation occurs at N458. S518 functions as the Charge relay system in the catalytic mechanism. N-linked (GlcNAc...) asparagine glycosylation is found at N555, N600, N648, and N658.

This sequence belongs to the peptidase S8 family. The C-terminal propeptide is autocleaved.

The protein localises to the secreted. In Arabidopsis thaliana (Mouse-ear cress), this protein is Subtilisin-like protease SBT4.13.